The sequence spans 205 residues: MSSMNPEYDYLFKLLLIGDSGVGKSCLLLRFADDTYTESYISTIGVDFKIRTIELDGKTIKLQIWDTAGQERFRTITSSYYRGAHGIIVVYDVTDQGSFNNVKQWLQEIDRYASENVNKLLVGNKCDLTTKKVVDYTTAKEFADSLGIPFLETSAKNATNVEQSFMTMAAEIKKRMGPGATAGGAEKSNVKIQSTPVKQSGGGCC.

Serine 2 is subject to N-acetylserine. Residues serine 20, glycine 21, glycine 23, lysine 24, serine 25, cysteine 26, glutamate 38, and threonine 43 each contribute to the GTP site. Residue serine 25 coordinates Mg(2+). The Switch 1 signature appears at 34 to 48 (DTYTESYISTIGVDF). Residue threonine 43 coordinates Mg(2+). Residues lysine 49 and lysine 61 each participate in a glycyl lysine isopeptide (Lys-Gly) (interchain with G-Cter in ubiquitin) cross-link. Residue aspartate 66 coordinates Mg(2+). The short motif at 66–83 (DTAGQERFRTITSSYYRG) is the Switch 2 element. Residues glycine 69, asparagine 124, lysine 125, aspartate 127, alanine 155, and lysine 156 each contribute to the GTP site. Residues 178 to 205 (PGATAGGAEKSNVKIQSTPVKQSGGGCC) form a disordered region. A Phosphoserine; by CDK1 modification is found at serine 194. Residues cysteine 204 and cysteine 205 are each lipidated (S-geranylgeranyl cysteine).

The protein belongs to the small GTPase superfamily. Rab family. As to quaternary structure, may interact with YIPF5. Interacts with C9orf72; the interaction mediates recruitment of RAB1A to the ATG1/ULK1 kinase complex. Interacts with GDI1; this promotes dissociation from membranes. The cofactor is Mg(2+). Phosphorylated by CDK1 kinase during mitosis. In terms of processing, ubiquitinated via 'Lys-11'-linked ubiquitination on Lys-49 and Lys-61; impairing the recruitment of guanosine diphosphate (GDP) dissociation inhibitor 1/GDI1.

The protein localises to the golgi apparatus. The protein resides in the endoplasmic reticulum. Its subcellular location is the early endosome. It is found in the cytoplasm. It localises to the cytosol. The protein localises to the membrane. The protein resides in the melanosome. The catalysed reaction is GTP + H2O = GDP + phosphate + H(+). Its activity is regulated as follows. Regulated by guanine nucleotide exchange factors (GEFs) which promote the exchange of bound GDP for free GTP. Regulated by GTPase activating proteins (GAPs) which increase the GTP hydrolysis activity. Inhibited by GDP dissociation inhibitors (GDIs). Functionally, the small GTPases Rab are key regulators of intracellular membrane trafficking, from the formation of transport vesicles to their fusion with membranes. Rabs cycle between an inactive GDP-bound form and an active GTP-bound form that is able to recruit to membranes different sets of downstream effectors directly responsible for vesicle formation, movement, tethering and fusion. RAB1A regulates vesicular protein transport from the endoplasmic reticulum (ER) to the Golgi compartment and on to the cell surface, and plays a role in IL-8 and growth hormone secretion. Required to modulate the compacted morphology of the Golgi. Regulates the level of CASR present at the cell membrane. Plays a role in cell adhesion and cell migration, via its role in protein trafficking. Plays a role in autophagosome assembly and cellular defense reactions against pathogenic bacteria. Plays a role in microtubule-dependent protein transport by early endosomes and in anterograde melanosome transport. This is Ras-related protein Rab-1A (RAB1A) from Sus scrofa (Pig).